We begin with the raw amino-acid sequence, 180 residues long: Large ribosomal subunit protein uL5 (180 aa).

The protein belongs to the universal ribosomal protein uL5 family. Part of the 50S ribosomal subunit; part of the 5S rRNA/L5/L18/L25 subcomplex. Contacts the 5S rRNA and the P site tRNA. Forms a bridge to the 30S subunit in the 70S ribosome.

This is one of the proteins that bind and probably mediate the attachment of the 5S RNA into the large ribosomal subunit, where it forms part of the central protuberance. In the 70S ribosome it contacts protein S13 of the 30S subunit (bridge B1b), connecting the 2 subunits; this bridge is implicated in subunit movement. Contacts the P site tRNA; the 5S rRNA and some of its associated proteins might help stabilize positioning of ribosome-bound tRNAs. The protein is Large ribosomal subunit protein uL5 of Cupriavidus necator (strain ATCC 17699 / DSM 428 / KCTC 22496 / NCIMB 10442 / H16 / Stanier 337) (Ralstonia eutropha).